We begin with the raw amino-acid sequence, 457 residues long: Multidrug resistance protein MdtK (457 aa).

12 helical membrane-spanning segments follow: residues 11–31 (LLALAIPVIFAQIAQTSMGVV), 53–73 (IWLPAILFGHGLLLALTPVIA), 93–113 (VLAGLVSVLIMLVLWNAGYII), 127–147 (AVNYLRALLWGAPGYLFFQVM), 160–180 (GMAMGFIGLLVNIPVNYIFIY), 188–208 (LGGVGCGVATASVYWVMFFCM), 243–263 (MPVALALFFEVTLFAVVALLV), 276–296 (IALNFSSLMFVLPMSMSAAVT), 316–336 (RTGIIVGICLAVLTALFTVVF), 357–377 (LMLLAAIYQISDSIQVIGSGV), 387–407 (IFFITFIAYWVLGLPSGYILG), and 418–438 (PAGFWFGFILGLTSAAIMMMW).

This sequence belongs to the multi antimicrobial extrusion (MATE) (TC 2.A.66.1) family. MdtK subfamily.

It is found in the cell inner membrane. Functionally, multidrug efflux pump that functions probably as a Na(+)/drug antiporter. The sequence is that of Multidrug resistance protein MdtK from Cronobacter sakazakii (strain ATCC BAA-894) (Enterobacter sakazakii).